We begin with the raw amino-acid sequence, 107 residues long: MKIFGLFLITALAEIIGCYLPYLWLREGKSVWLLVPAALSLAIFAWLLSLHPAAAGRVYAAYGGVYIFMAILWLWAVDGIRPTTWDLVGSGVALVGMAIIMFAPRSV.

4 helical membrane passes run 3–23 (IFGL…LPYL), 30–50 (SVWL…LLSL), 60–80 (AAYG…VDGI), and 84–104 (TWDL…MFAP).

The protein belongs to the UPF0060 family.

It is found in the cell inner membrane. This Pseudoalteromonas translucida (strain TAC 125) protein is UPF0060 membrane protein PSHAa1175.